A 295-amino-acid chain; its full sequence is Phosphonoacetaldehyde hydrolase (295 aa).

The active-site Nucleophile is D36. Positions 36 and 38 each coordinate Mg(2+). Catalysis depends on K78, which acts as the Schiff-base intermediate with substrate. Position 212 (D212) interacts with Mg(2+).

This sequence belongs to the HAD-like hydrolase superfamily. PhnX family. Homodimer. It depends on Mg(2+) as a cofactor.

The enzyme catalyses phosphonoacetaldehyde + H2O = acetaldehyde + phosphate + H(+). Involved in phosphonate degradation. In Psychromonas ingrahamii (strain DSM 17664 / CCUG 51855 / 37), this protein is Phosphonoacetaldehyde hydrolase.